The following is a 286-amino-acid chain: Putative chaperone BssE (286 aa).

ATP-binding positions include G47 to S54 and G108 to E115.

The protein belongs to the CbbQ/NirQ/NorQ/GpvN family.

May have a role in assembly and/or activation of benzylsuccinate synthase. The chain is Putative chaperone BssE (bssE) from Thauera aromatica.